A 297-amino-acid polypeptide reads, in one-letter code: AKT-interacting protein (297 aa).

The span at 1–13 (MNLNPFWSMSTNT) shows a compositional bias: polar residues. The segment at 1–45 (MNLNPFWSMSTNTGRKRSDGEEQSGEQQQQQRASPARPSFGKKQL) is disordered. Positions 25–39 (GEQQQQQRASPARPS) are enriched in low complexity. The 149-residue stretch at 79–227 (YLEYSLLAEF…VVDSVKLCNS (149 aa)) folds into the UBC core domain. The tract at residues 262 to 297 (KRRPEDHHKGLQVSGLSWVKPGSTQPFSKDDNPPQN) is disordered.

This sequence belongs to the ubiquitin-conjugating enzyme family. FTS subfamily.

Its subcellular location is the cytoplasm. The protein localises to the cell membrane. Its function is as follows. May function to promote vesicle trafficking and/or fusion. May also regulate apoptosis. This chain is AKT-interacting protein (aktip), found in Salmo salar (Atlantic salmon).